A 78-amino-acid polypeptide reads, in one-letter code: HSQGTFTNDYSKYLDTRRAQDFVQWLMSTKRSGGITXXXXXXXXHADGTYTSDVSSYLQDQAAKKFVTWLKQGQDRRE.

It belongs to the glucagon family.

The protein resides in the secreted. Functionally, plays a key role in glucose metabolism and homeostasis. Regulates blood glucose by increasing gluconeogenesis and decreasing glycolysis. In Atractosteus spatula (Alligator gar), this protein is Pro-glucagon (gcg).